We begin with the raw amino-acid sequence, 114 residues long: uncharacterized protein (114 aa).

This is an uncharacterized protein from Escherichia coli O6:H1 (strain CFT073 / ATCC 700928 / UPEC).